A 530-amino-acid chain; its full sequence is Growth-regulating factor 1 (530 aa).

Positions 1 to 41 are disordered; sequence MDLGVRVSGHETVSSPGQTELGSGFSNKQERSGFDGEDCWR. Positions 11-27 are enriched in polar residues; sequence ETVSSPGQTELGSGFSN. The segment covering 28–41 has biased composition (basic and acidic residues); sequence KQERSGFDGEDCWR. One can recognise a QLQ domain in the interval 133–168; the sequence is PFSLTQWAELEQQALIYKYITANVPVPSSLLLSLKK. The WRC domain maps to 196–240; the sequence is DPEPGRCRRTDGKKWRCSRDAVPDQKYCERHINRGRHRSRKPVEG. 2 short sequence motifs (bipartite nuclear localization signal) span residues 201–211 and 229–236; these read RCRRTDGKKWR and RGRHRSRK. Disordered regions lie at residues 223-250 and 485-530; these read CERH…NAAA and STFG…APSL. Residues 485–508 are compositionally biased toward low complexity; sequence STFGSLSNSSSASSTIIGDNNNKN. The segment covering 519 to 530 has biased composition (polar residues); it reads TLMNTSATAPSL.

The protein belongs to the GRF family. As to quaternary structure, interacts with GIF1 and GIF2. In terms of tissue distribution, strongly expressed in actively growing and developing tissues, such as roots, upper stems, and shoot tips containing the shoot apical meristem (SAM) and flower buds. Also expressed in mature flowers, but weakly expressed in mature stems and leaves.

The protein resides in the nucleus. Transcription activator that plays a role in the regulation of cell expansion in leaf and cotyledons tissues. Component of a network formed by miR396, the GRFs and their interacting factors (GIFs) acting in the regulation of meristem function, at least partially through the control of cell proliferation. microRNA396-GRF1/GRF3 regulatory module acts as a developmental regulator in the reprogramming of root cells during cyst nematode infection, leading to the formation of the syncytium. This is Growth-regulating factor 1 (GRF1) from Arabidopsis thaliana (Mouse-ear cress).